A 558-amino-acid chain; its full sequence is Glucose-6-phosphate isomerase (558 aa).

Glu362 acts as the Proton donor in catalysis. Catalysis depends on residues His393 and Lys523.

Belongs to the GPI family.

It localises to the cytoplasm. It catalyses the reaction alpha-D-glucose 6-phosphate = beta-D-fructose 6-phosphate. Its pathway is carbohydrate degradation; glycolysis; D-glyceraldehyde 3-phosphate and glycerone phosphate from D-glucose: step 2/4. In Drosophila simulans (Fruit fly), this protein is Glucose-6-phosphate isomerase (Pgi).